The sequence spans 619 residues: Chaperone protein HscA homolog (619 aa).

It belongs to the heat shock protein 70 family.

Functionally, chaperone involved in the maturation of iron-sulfur cluster-containing proteins. Has a low intrinsic ATPase activity which is markedly stimulated by HscB. This Shewanella amazonensis (strain ATCC BAA-1098 / SB2B) protein is Chaperone protein HscA homolog.